A 127-amino-acid chain; its full sequence is Glycine cleavage system H protein (127 aa).

A Lipoyl-binding domain is found at 24–106 (TATIGITDYA…YAEGWMLKLK (83 aa)). Lys65 bears the N6-lipoyllysine mark.

Belongs to the GcvH family. As to quaternary structure, the glycine cleavage system is composed of four proteins: P, T, L and H. (R)-lipoate serves as cofactor.

The glycine cleavage system catalyzes the degradation of glycine. The H protein shuttles the methylamine group of glycine from the P protein to the T protein. The protein is Glycine cleavage system H protein of Opitutus terrae (strain DSM 11246 / JCM 15787 / PB90-1).